The primary structure comprises 308 residues: ATP synthase gamma chain (308 aa).

This sequence belongs to the ATPase gamma chain family. In terms of assembly, F-type ATPases have 2 components, CF(1) - the catalytic core - and CF(0) - the membrane proton channel. CF(1) has five subunits: alpha(3), beta(3), gamma(1), delta(1), epsilon(1). CF(0) has three main subunits: a, b and c.

It localises to the cell inner membrane. Produces ATP from ADP in the presence of a proton gradient across the membrane. The gamma chain is believed to be important in regulating ATPase activity and the flow of protons through the CF(0) complex. The sequence is that of ATP synthase gamma chain from Salinibacter ruber (strain DSM 13855 / M31).